We begin with the raw amino-acid sequence, 476 residues long: Argininosuccinate lyase (476 aa).

It belongs to the lyase 1 family. Argininosuccinate lyase subfamily.

The protein localises to the cytoplasm. The enzyme catalyses 2-(N(omega)-L-arginino)succinate = fumarate + L-arginine. It participates in amino-acid biosynthesis; L-arginine biosynthesis; L-arginine from L-ornithine and carbamoyl phosphate: step 3/3. In Thermobifida fusca (strain YX), this protein is Argininosuccinate lyase.